A 330-amino-acid chain; its full sequence is Malate dehydrogenase (330 aa).

12–18 is an NAD(+) binding site; it reads GAAGQIG. Substrate-binding residues include Arg93 and Arg99. NAD(+) contacts are provided by residues Asn106, Gln113, and 130-132; that span reads VGN. Positions 132 and 163 each coordinate substrate. The Proton acceptor role is filled by His188.

The protein belongs to the LDH/MDH superfamily. MDH type 2 family.

It carries out the reaction (S)-malate + NAD(+) = oxaloacetate + NADH + H(+). Functionally, catalyzes the reversible oxidation of malate to oxaloacetate. This chain is Malate dehydrogenase, found in Legionella pneumophila (strain Lens).